Reading from the N-terminus, the 512-residue chain is Maturase K (512 aa).

It belongs to the intron maturase 2 family. MatK subfamily.

The protein resides in the plastid. Its subcellular location is the chloroplast. Usually encoded in the trnK tRNA gene intron. Probably assists in splicing its own and other chloroplast group II introns. This is Maturase K from Zantedeschia aethiopica (White calla lily).